Consider the following 356-residue polypeptide: Holliday junction branch migration complex subunit RuvB (356 aa).

The interval 4-191 (TDKLATEQRI…FGIVARLEFY (188 aa)) is large ATPase domain (RuvB-L). ATP contacts are provided by residues leucine 30, arginine 31, glycine 72, lysine 75, threonine 76, threonine 77, 138-140 (EDY), arginine 181, tyrosine 191, and arginine 228. Threonine 76 provides a ligand contact to Mg(2+). Positions 192-262 (DAEQLSRIVR…VADAALAMLD (71 aa)) are small ATPAse domain (RuvB-S). Residues 265–356 (PVGFDLMDRK…RDEWDTPDGK (92 aa)) form a head domain (RuvB-H) region. Arginine 301, arginine 320, and arginine 325 together coordinate DNA.

Belongs to the RuvB family. As to quaternary structure, homohexamer. Forms an RuvA(8)-RuvB(12)-Holliday junction (HJ) complex. HJ DNA is sandwiched between 2 RuvA tetramers; dsDNA enters through RuvA and exits via RuvB. An RuvB hexamer assembles on each DNA strand where it exits the tetramer. Each RuvB hexamer is contacted by two RuvA subunits (via domain III) on 2 adjacent RuvB subunits; this complex drives branch migration. In the full resolvosome a probable DNA-RuvA(4)-RuvB(12)-RuvC(2) complex forms which resolves the HJ.

The protein localises to the cytoplasm. The catalysed reaction is ATP + H2O = ADP + phosphate + H(+). The RuvA-RuvB-RuvC complex processes Holliday junction (HJ) DNA during genetic recombination and DNA repair, while the RuvA-RuvB complex plays an important role in the rescue of blocked DNA replication forks via replication fork reversal (RFR). RuvA specifically binds to HJ cruciform DNA, conferring on it an open structure. The RuvB hexamer acts as an ATP-dependent pump, pulling dsDNA into and through the RuvAB complex. RuvB forms 2 homohexamers on either side of HJ DNA bound by 1 or 2 RuvA tetramers; 4 subunits per hexamer contact DNA at a time. Coordinated motions by a converter formed by DNA-disengaged RuvB subunits stimulates ATP hydrolysis and nucleotide exchange. Immobilization of the converter enables RuvB to convert the ATP-contained energy into a lever motion, pulling 2 nucleotides of DNA out of the RuvA tetramer per ATP hydrolyzed, thus driving DNA branch migration. The RuvB motors rotate together with the DNA substrate, which together with the progressing nucleotide cycle form the mechanistic basis for DNA recombination by continuous HJ branch migration. Branch migration allows RuvC to scan DNA until it finds its consensus sequence, where it cleaves and resolves cruciform DNA. This chain is Holliday junction branch migration complex subunit RuvB, found in Burkholderia cenocepacia (strain HI2424).